We begin with the raw amino-acid sequence, 223 residues long: Ribose-5-phosphate isomerase A (223 aa).

Residues 28–31, 81–84, and 94–97 each bind substrate; these read TGST, DGAD, and KGGG. The active-site Proton acceptor is E103. Position 121 (K121) interacts with substrate.

This sequence belongs to the ribose 5-phosphate isomerase family. As to quaternary structure, homodimer.

The catalysed reaction is aldehydo-D-ribose 5-phosphate = D-ribulose 5-phosphate. The protein operates within carbohydrate degradation; pentose phosphate pathway; D-ribose 5-phosphate from D-ribulose 5-phosphate (non-oxidative stage): step 1/1. Catalyzes the reversible conversion of ribose-5-phosphate to ribulose 5-phosphate. This Herminiimonas arsenicoxydans protein is Ribose-5-phosphate isomerase A.